A 142-amino-acid polypeptide reads, in one-letter code: gSG7 salivary protein (142 aa).

The N-terminal stretch at 1–26 is a signal peptide; the sequence is MAARMTIMLPLAVALICLLQTEPGMA. Intrachain disulfides connect cysteine 84-cysteine 139 and cysteine 107-cysteine 117.

It is found in the secreted. Salivary protein that moderately inhibits the alternative pathway for complement system activation in the host. This is gSG7 salivary protein from Anopheles darlingi (Mosquito).